A 137-amino-acid polypeptide reads, in one-letter code: Transcription antitermination protein NusB (137 aa).

Belongs to the NusB family.

Its function is as follows. Involved in transcription antitermination. Required for transcription of ribosomal RNA (rRNA) genes. Binds specifically to the boxA antiterminator sequence of the ribosomal RNA (rrn) operons. The protein is Transcription antitermination protein NusB of Clavibacter sepedonicus (Clavibacter michiganensis subsp. sepedonicus).